Here is a 263-residue protein sequence, read N- to C-terminus: Phosphate import ATP-binding protein PstB (263 aa).

Positions 16–258 constitute an ABC transporter domain; the sequence is VTARNVTVSY…PRDTRTQDYI (243 aa). 48-55 provides a ligand contact to ATP; sequence GPSGCGKS.

The protein belongs to the ABC transporter superfamily. Phosphate importer (TC 3.A.1.7) family. In terms of assembly, the complex is composed of two ATP-binding proteins (PstB), two transmembrane proteins (PstC and PstA) and a solute-binding protein (PstS).

The protein resides in the cell inner membrane. The enzyme catalyses phosphate(out) + ATP + H2O = ADP + 2 phosphate(in) + H(+). Functionally, part of the ABC transporter complex PstSACB involved in phosphate import. Responsible for energy coupling to the transport system. The protein is Phosphate import ATP-binding protein PstB of Maricaulis maris (strain MCS10) (Caulobacter maris).